The sequence spans 107 residues: Integration host factor subunit alpha (107 aa).

This sequence belongs to the bacterial histone-like protein family. As to quaternary structure, heterodimer of an alpha and a beta chain.

Its function is as follows. This protein is one of the two subunits of integration host factor, a specific DNA-binding protein that functions in genetic recombination as well as in transcriptional and translational control. This chain is Integration host factor subunit alpha, found in Brucella abortus (strain S19).